A 186-amino-acid polypeptide reads, in one-letter code: dTTP/UTP pyrophosphatase (186 aa).

The active-site Proton acceptor is aspartate 67.

This sequence belongs to the Maf family. YhdE subfamily. A divalent metal cation serves as cofactor.

It localises to the cytoplasm. It carries out the reaction dTTP + H2O = dTMP + diphosphate + H(+). It catalyses the reaction UTP + H2O = UMP + diphosphate + H(+). In terms of biological role, nucleoside triphosphate pyrophosphatase that hydrolyzes dTTP and UTP. May have a dual role in cell division arrest and in preventing the incorporation of modified nucleotides into cellular nucleic acids. This Carboxydothermus hydrogenoformans (strain ATCC BAA-161 / DSM 6008 / Z-2901) protein is dTTP/UTP pyrophosphatase.